The following is a 1719-amino-acid chain: Sodium channel protein type 4 subunit alpha B (1719 aa).

Residues 1–126 are Cytoplasmic-facing; the sequence is MRTLLPPVGS…IVAIKILIHS (126 aa). A disordered region spans residues 28-50; the sequence is QQIREEERKRTNAQVSEELPEPA. Residues 108-431 form an I repeat; sequence LLSPFNALRI…VVAMAYAEQN (324 aa). The chain crosses the membrane as a helical span at residues 127-145; sequence LFSLFIMATILTNCAFMTL. The Extracellular portion of the chain corresponds to 146–152; it reads SDPPAWS. The chain crosses the membrane as a helical span at residues 153–173; the sequence is KTMEYVFTFIYTFEATIKILS. The Cytoplasmic segment spans residues 174–187; sequence RGFCVGKFTFLKDP. Residues 188 to 205 traverse the membrane as a helical segment; that stretch reads WNWLDFMVISMAYLTELV. The Extracellular segment spans residues 206-211; that stretch reads DLGNVS. The N-linked (GlcNAc...) asparagine glycan is linked to N209. Residues 212-228 form a helical membrane-spanning segment; the sequence is VLRTFRVLRALKTITVI. Residues 229–247 lie on the Cytoplasmic side of the membrane; sequence PGLKTIVGALIQSVRKLAD. A helical membrane pass occupies residues 248–267; it reads AMVLTVFCLSVFALIGLQLF. Residues 268–368 lie on the Extracellular side of the membrane; sequence MGNLRQKCVL…PNYGYTSYDS (101 aa). Cysteines 275 and 337 form a disulfide. Residues N285 and N339 are each glycosylated (N-linked (GlcNAc...) asparagine). An intrachain disulfide couples C346 to C352. The pore-forming intramembrane region spans 369–393; sequence FGWAFLALFRLMTQDFWENLFQLTL. Residues 394–400 are Extracellular-facing; that stretch reads RTAGKTY. The chain crosses the membrane as a helical span at residues 401 to 421; sequence MIFFVVVIFLGSFYLINLILA. The Cytoplasmic portion of the chain corresponds to 422-513; sequence VVAMAYAEQN…ECLYAIVMDP (92 aa). An II repeat occupies 495-766; that stretch reads CCGCWRHLKE…QIAINRINRA (272 aa). The chain crosses the membrane as a helical span at residues 514-532; the sequence is FVDLGITICIILNTVFMAM. The Extracellular segment spans residues 533–543; it reads EHYPMSADFEE. The chain crosses the membrane as a helical span at residues 544–563; that stretch reads LLSVGNLVFTGIFTGEMVFK. At 564–577 the chain is on the cytoplasmic side; it reads ILAMDPYFYFQVGW. Residues 578 to 597 form a helical membrane-spanning segment; it reads NIFDSIIVTISLVELGLANV. At 598–599 the chain is on the extracellular side; sequence QG. The helical transmembrane segment at 600 to 617 threads the bilayer; it reads LSVLRSFRLMRVFKLAKS. Residues 618–633 are Cytoplasmic-facing; the sequence is WPTLNMLIKIIGNSVG. The helical transmembrane segment at 634–652 threads the bilayer; sequence ALGNLTLVLAIIVFIFAVV. Topologically, residues 653–681 are extracellular; the sequence is GMQLFGKNYKDCVCRISEDCVLPRWHMND. C666 and C672 are disulfide-bonded. An intramembrane region (pore-forming) is located at residues 682-702; sequence FFHAFLIIFRVLCGEWIESMW. Residues 703-713 lie on the Extracellular side of the membrane; it reads DCMEVSGQTMC. The cysteines at positions 704 and 713 are disulfide-linked. The helical transmembrane segment at 714 to 732 threads the bilayer; it reads LIVFMMVLVIGNLVVLNLF. The Cytoplasmic segment spans residues 733 to 919; the sequence is LALLLSSFSG…TCFSIVENNY (187 aa). Acidic residues predominate over residues 834 to 845; sequence SDSDDSDYDEDK. A disordered region spans residues 834–862; the sequence is SDSDDSDYDEDKDSQCDESSVCSSVQKPE. An III repeat occupies 900 to 1215; the sequence is RGKIWCNIRR…KKYYNAMKKL (316 aa). Residues 920-937 traverse the membrane as a helical segment; the sequence is FESFIVFMILLSSGALAF. Over 938-950 the chain is Extracellular; that stretch reads EDIYLEKHQLIKS. Residues 951–969 traverse the membrane as a helical segment; the sequence is ILEYADKVFTYVFVMEMVL. The Cytoplasmic portion of the chain corresponds to 970-983; it reads KWFAYGFKSYFSNA. The chain crosses the membrane as a helical span at residues 984–1002; that stretch reads WCWLDFLIVDVSLVSLTAN. The Extracellular portion of the chain corresponds to 1003–1010; that stretch reads ILGYSELG. Residues 1011–1029 form a helical membrane-spanning segment; sequence AIKSLRTLRALRPLRALSR. The Cytoplasmic portion of the chain corresponds to 1030 to 1046; the sequence is FEGMRVVVNALVGAVPS. Residues 1047–1066 traverse the membrane as a helical segment; it reads IFNVLLVCLIFWLIFSIMGV. Over 1067–1119 the chain is Extracellular; sequence NLFAGKFSYCFNETSQEIIDTKVVDNKTECIALIKANFTEVRWKNVKVNYDNV. The cysteines at positions 1076 and 1096 are disulfide-linked. Residues N1078 and N1092 are each glycosylated (N-linked (GlcNAc...) asparagine). Positions 1120-1141 form an intramembrane region, pore-forming; sequence GIGYLSLLQVATFKGWTDIMYA. The Extracellular segment spans residues 1142–1158; sequence AVDSRDVESQPIYEVNL. The helical transmembrane segment at 1159–1180 threads the bilayer; sequence YMYLYFVIFIIFGSFFTLNLFI. At 1181–1243 the chain is on the cytoplasmic side; sequence GVIIDNFNQQ…LVFDLVTKQI (63 aa). The interval 1199–1201 is important for rapid channel inactivation; it reads IFM. Residues 1224 to 1521 form an IV repeat; sequence VPRPENPFQG…WEKFDPDASQ (298 aa). A helical transmembrane segment spans residues 1244–1261; it reads FDVFIMVLICLNMVTMMV. Residues 1262-1272 lie on the Extracellular side of the membrane; that stretch reads ETDEQSDKKEE. A helical membrane pass occupies residues 1273–1291; that stretch reads VLYWINVVFILIFTTECTL. Topologically, residues 1292–1303 are cytoplasmic; the sequence is KIIALRRHYFSI. Residues 1304–1321 form a helical membrane-spanning segment; sequence GWNIFDFVVVILSILGLL. Residues 1322–1334 are Extracellular-facing; the sequence is LADIIEKYFVSPT. Residues 1335–1351 form a helical membrane-spanning segment; it reads LFRVIRLARIGRVLRLI. Topologically, residues 1352-1370 are cytoplasmic; it reads RGAKGIRTLLFALMMSLPA. Residues 1371-1388 traverse the membrane as a helical segment; sequence LFNIGLLLFLIMFIFSIF. Residues 1389 to 1410 are Extracellular-facing; the sequence is GMSNFAYVKKEALIDDMFNFET. The pore-forming intramembrane region spans 1411–1433; that stretch reads FGNSMICLFMITTSAGWDGLLSP. Residues 1434-1462 are Extracellular-facing; sequence IMNTPPDCDPNVENPGTTVRGNCGSPAIG. A disulfide bridge connects residues C1441 and C1456. The helical transmembrane segment at 1463–1485 threads the bilayer; the sequence is IAFFSTYIIMSFLVVVNMFIAII. Over 1486-1719 the chain is Cytoplasmic; it reads LENFNVATEE…QERDQRETSV (234 aa). Positions 1615 to 1644 constitute an IQ domain; sequence EEVAATVIQRAYRKYLLLRTVRLASFMYRE.

The protein belongs to the sodium channel (TC 1.A.1.10) family. Nav1.4/SCN4A subfamily. Voltage-gated sodium (Nav) channels consist of an ion-conducting alpha subunit which is functional on its own associated with regulatory beta subunits.

It is found in the cell membrane. The enzyme catalyses Na(+)(in) = Na(+)(out). Functionally, pore-forming subunit of a voltage-gated sodium (Nav) channel that directly mediates the depolarizing phase of action potentials in excitable membranes. Navs, also called VGSCs (voltage-gated sodium channels) or VDSCs (voltage-dependent sodium channels), operate by switching between closed and open conformations depending on the voltage difference across the membrane. In the open conformation they allow Na(+) ions to selectively pass through the pore, along their electrochemical gradient. The influx of Na+ ions provokes membrane depolarization, initiating the propagation of electrical signals throughout cells and tissues. This is Sodium channel protein type 4 subunit alpha B (scn4ab) from Takifugu rubripes (Japanese pufferfish).